The chain runs to 311 residues: Ribosomal RNA small subunit methyltransferase H (311 aa).

Residues 33 to 35 (AGH), Asp53, Phe80, Asp101, and Gln108 contribute to the S-adenosyl-L-methionine site.

The protein belongs to the methyltransferase superfamily. RsmH family.

The protein localises to the cytoplasm. It catalyses the reaction cytidine(1402) in 16S rRNA + S-adenosyl-L-methionine = N(4)-methylcytidine(1402) in 16S rRNA + S-adenosyl-L-homocysteine + H(+). Specifically methylates the N4 position of cytidine in position 1402 (C1402) of 16S rRNA. The sequence is that of Ribosomal RNA small subunit methyltransferase H from Alkaliphilus oremlandii (strain OhILAs) (Clostridium oremlandii (strain OhILAs)).